The chain runs to 311 residues: Probable dihydroorotate dehydrogenase A (fumarate) (311 aa).

FMN is bound by residues serine 20 and 44–45 (KT). Substrate-binding positions include lysine 44, 68–72 (NSMGL), and asparagine 127. Asparagine 127 is an FMN binding site. The Nucleophile role is filled by cysteine 130. Positions 164 and 192 each coordinate FMN. 193-194 (NS) is a binding site for substrate. FMN contacts are provided by residues glycine 221, 249–250 (GG), and 271–272 (GT).

Belongs to the dihydroorotate dehydrogenase family. Type 1 subfamily. Homodimer. FMN serves as cofactor.

It localises to the cytoplasm. It catalyses the reaction (S)-dihydroorotate + fumarate = orotate + succinate. The protein operates within pyrimidine metabolism; UMP biosynthesis via de novo pathway. In terms of biological role, catalyzes the conversion of dihydroorotate to orotate with fumarate as the electron acceptor. The polypeptide is Probable dihydroorotate dehydrogenase A (fumarate) (pyrDA) (Enterococcus faecalis (strain ATCC 700802 / V583)).